The chain runs to 65 residues: Large ribosomal subunit protein bL35 (65 aa).

It belongs to the bacterial ribosomal protein bL35 family.

The chain is Large ribosomal subunit protein bL35 from Borrelia duttonii (strain Ly).